A 217-amino-acid polypeptide reads, in one-letter code: tRNA (guanine-N(7)-)-methyltransferase (217 aa).

Residues Glu48, Glu73, Asn100, and Asp123 each contribute to the S-adenosyl-L-methionine site. Residue Asp123 is part of the active site. Substrate contacts are provided by Lys127 and Asp159.

This sequence belongs to the class I-like SAM-binding methyltransferase superfamily. TrmB family.

It catalyses the reaction guanosine(46) in tRNA + S-adenosyl-L-methionine = N(7)-methylguanosine(46) in tRNA + S-adenosyl-L-homocysteine. It participates in tRNA modification; N(7)-methylguanine-tRNA biosynthesis. Functionally, catalyzes the formation of N(7)-methylguanine at position 46 (m7G46) in tRNA. The chain is tRNA (guanine-N(7)-)-methyltransferase from Leptospira interrogans serogroup Icterohaemorrhagiae serovar copenhageni (strain Fiocruz L1-130).